We begin with the raw amino-acid sequence, 92 residues long: Small ribosomal subunit protein uS19c (92 aa).

It belongs to the universal ribosomal protein uS19 family.

The protein resides in the plastid. The protein localises to the chloroplast. Its function is as follows. Protein S19 forms a complex with S13 that binds strongly to the 16S ribosomal RNA. The sequence is that of Small ribosomal subunit protein uS19c from Gossypium barbadense (Sea Island cotton).